The chain runs to 231 residues: dTTP/UTP pyrophosphatase (231 aa).

Asp-85 (proton acceptor) is an active-site residue.

Belongs to the Maf family. YhdE subfamily. A divalent metal cation serves as cofactor.

It localises to the cytoplasm. The catalysed reaction is dTTP + H2O = dTMP + diphosphate + H(+). It catalyses the reaction UTP + H2O = UMP + diphosphate + H(+). Functionally, nucleoside triphosphate pyrophosphatase that hydrolyzes dTTP and UTP. May have a dual role in cell division arrest and in preventing the incorporation of modified nucleotides into cellular nucleic acids. This chain is dTTP/UTP pyrophosphatase, found in Psychrobacter arcticus (strain DSM 17307 / VKM B-2377 / 273-4).